A 321-amino-acid chain; its full sequence is Outer envelope protein 36, chloroplastic (321 aa).

Belongs to the OEP80 (TC 1.B.33.2) family. Expressed in germinating seeds.

It is found in the plastid. The protein resides in the chloroplast outer membrane. In terms of biological role, may play a role during plastid development. This is Outer envelope protein 36, chloroplastic from Arabidopsis thaliana (Mouse-ear cress).